An 822-amino-acid chain; its full sequence is Myosin-D (822 aa).

One can recognise a Myosin motor domain in the interval leucine 95 to arginine 770. Glycine 189 to threonine 196 lines the ATP pocket. Residues serine 660 to aspartate 670 are actin-binding. The tail stretch occupies residues alanine 772–cysteine 822.

The protein belongs to the TRAFAC class myosin-kinesin ATPase superfamily. Myosin family.

It localises to the cell membrane. It is found in the cytoplasm. Functionally, myosins are actin-based motor molecules with ATPase activity. Unconventional myosins serve in intracellular movements. Their highly divergent tails are presumed to bind to membranous compartments, which would be moved relative to actin filaments. The polypeptide is Myosin-D (Toxoplasma gondii).